Here is a 271-residue protein sequence, read N- to C-terminus: MSAAADVPRRVTIHDLQLRKRQHRRWAMLTCYDALTARIFEEAGIDVLLVGDSAANTVLGYPDTLGVDVDELLILNRAVARAAQRALVVADLPFGSYQISPRQALQTAIRFVKRAGVQAVKFEGGRRVAEHVRTVVEAGIPVMAHIGFTPQSVHALGGYRVQGRGDDAAAIRDDALALQEAGAFAIVLELVPAGLAAELTAALQIPTIGIGAGPDCDAQVLVWTDMAGLTPQPTPKFVKRYADLRTVLHDAARAFAADVADGRYPDAAHSY.

Mg(2+) is bound by residues Asp52 and Asp91. 3-methyl-2-oxobutanoate contacts are provided by residues 52–53, Asp91, and Lys121; that span reads DS. Glu123 is a Mg(2+) binding site. The active-site Proton acceptor is the Glu189.

The protein belongs to the PanB family. Homodecamer; pentamer of dimers. Mg(2+) serves as cofactor.

The protein resides in the cytoplasm. It carries out the reaction 3-methyl-2-oxobutanoate + (6R)-5,10-methylene-5,6,7,8-tetrahydrofolate + H2O = 2-dehydropantoate + (6S)-5,6,7,8-tetrahydrofolate. The protein operates within cofactor biosynthesis; (R)-pantothenate biosynthesis; (R)-pantoate from 3-methyl-2-oxobutanoate: step 1/2. Its function is as follows. Catalyzes the reversible reaction in which hydroxymethyl group from 5,10-methylenetetrahydrofolate is transferred onto alpha-ketoisovalerate to form ketopantoate. The sequence is that of 3-methyl-2-oxobutanoate hydroxymethyltransferase from Acidothermus cellulolyticus (strain ATCC 43068 / DSM 8971 / 11B).